A 210-amino-acid chain; its full sequence is Small ribosomal subunit protein uS3 (210 aa).

The 69-residue stretch at 39 to 107 folds into the KH type-2 domain; sequence IREKLMEKLK…EILLDIQEVK (69 aa).

This sequence belongs to the universal ribosomal protein uS3 family. Part of the 30S ribosomal subunit. Forms a tight complex with proteins S10 and S14.

Binds the lower part of the 30S subunit head. Binds mRNA in the 70S ribosome, positioning it for translation. This is Small ribosomal subunit protein uS3 from Opitutus terrae (strain DSM 11246 / JCM 15787 / PB90-1).